A 499-amino-acid chain; its full sequence is Protein nucleotidyltransferase YdiU (499 aa).

8 residues coordinate ATP: Gly-95, Gly-97, Arg-98, Lys-117, Asp-129, Gly-130, Arg-180, and Arg-187. Asp-256 (proton acceptor) is an active-site residue. Asn-257 and Asp-266 together coordinate Mg(2+). Position 266 (Asp-266) interacts with ATP.

This sequence belongs to the SELO family. Mg(2+) is required as a cofactor. It depends on Mn(2+) as a cofactor.

The catalysed reaction is L-seryl-[protein] + ATP = 3-O-(5'-adenylyl)-L-seryl-[protein] + diphosphate. The enzyme catalyses L-threonyl-[protein] + ATP = 3-O-(5'-adenylyl)-L-threonyl-[protein] + diphosphate. It carries out the reaction L-tyrosyl-[protein] + ATP = O-(5'-adenylyl)-L-tyrosyl-[protein] + diphosphate. It catalyses the reaction L-histidyl-[protein] + UTP = N(tele)-(5'-uridylyl)-L-histidyl-[protein] + diphosphate. The catalysed reaction is L-seryl-[protein] + UTP = O-(5'-uridylyl)-L-seryl-[protein] + diphosphate. The enzyme catalyses L-tyrosyl-[protein] + UTP = O-(5'-uridylyl)-L-tyrosyl-[protein] + diphosphate. Functionally, nucleotidyltransferase involved in the post-translational modification of proteins. It can catalyze the addition of adenosine monophosphate (AMP) or uridine monophosphate (UMP) to a protein, resulting in modifications known as AMPylation and UMPylation. This chain is Protein nucleotidyltransferase YdiU, found in Dechloromonas aromatica (strain RCB).